The primary structure comprises 533 residues: Solute carrier family 2, facilitated glucose transporter member 2 (533 aa).

Topologically, residues 1–17 (MDGKSKMQAEKHLTGTL) are cytoplasmic. A helical transmembrane segment spans residues 18-38 (VLSVFTAVLGFFQYGYSLGVI). The Extracellular segment spans residues 39–110 (NAPQKVIEAH…SPHILTMYWS (72 aa)). N-linked (GlcNAc...) asparagine glycosylation is found at Asn-64 and Asn-69. A helical transmembrane segment spans residues 111 to 131 (LSVSMFAVGGMVSSFTVGWIG). At 132–136 (DRLGR) the chain is on the cytoplasmic side. A helical membrane pass occupies residues 137–157 (VKAMLVVNVLSIAGNLLMGLA). Over 158–163 (KMGPSH) the chain is Extracellular. The helical transmembrane segment at 164–184 (ILIIAGRAITGLYCGLSSGLV) threads the bilayer. Topologically, residues 185-199 (PMYVSEVSPTALRGA) are cytoplasmic. A helical transmembrane segment spans residues 200–220 (LGTLHQLAIVTGILISQVLGL). Gln-205 contributes to the D-glucose binding site. Over 221–229 (DFLLGNDEL) the chain is Extracellular. Residues 230–250 (WPLLLGLSGVAALLQFFLLLL) traverse the membrane as a helical segment. Over 251–315 (CPESPRYLYI…LFSSSKYRQA (65 aa)) the chain is Cytoplasmic. A helical membrane pass occupies residues 316–336 (VIVALMVQISQQFSGINAIFY). Residues 326–327 (QQ) and Asn-332 contribute to the D-glucose site. At 337–350 (YSTNIFQRAGVGQP) the chain is on the extracellular side. A helical transmembrane segment spans residues 351–371 (VYATIGVGVVNTVFTVISVFL). D-glucose is bound at residue Asn-361. Residues 372–379 (VEKAGRRS) lie on the Cytoplasmic side of the membrane. Residues 380-400 (LFLAGLMGMLISAVAMTVGLV) traverse the membrane as a helical segment. The Extracellular portion of the chain corresponds to 401–413 (LLSQFAWMSYVSM). A helical membrane pass occupies residues 414–434 (VAIFLFVIFFEVGPGPIPWFI). Glu-424 and Trp-432 together coordinate D-glucose. Over 435–445 (VAELFSQGPRP) the chain is Cytoplasmic. Residues 446-466 (AAIAVAGFCNWACNFIVGMCF) traverse the membrane as a helical segment. Residues 467-471 (QYIAD) lie on the Extracellular side of the membrane. The helical transmembrane segment at 472–492 (LCGPYVFVVFAVLLLVFFLFA) threads the bilayer. Residues 493-533 (YLKVPETKGKSFEEIAAAFRRKKLPAKSMTELEDLRGGEEA) lie on the Cytoplasmic side of the membrane.

Belongs to the major facilitator superfamily. Sugar transporter (TC 2.A.1.1) family. Glucose transporter subfamily.

Its subcellular location is the cell membrane. The catalysed reaction is D-glucose(out) = D-glucose(in). It catalyses the reaction D-fructose(out) = D-fructose(in). The enzyme catalyses L-dehydroascorbate(out) = L-dehydroascorbate(in). It carries out the reaction D-galactose(in) = D-galactose(out). D-glucose and maltose competitively inhibit fructose transport. D-glucose, D-fructose and maltose inhibit deoxyglucose transport. Facilitative hexose transporter that mediates the transport of glucose, fructose and galactose. Likely mediates the bidirectional transfer of glucose across the plasma membrane of hepatocytes and is responsible for uptake of glucose by the beta cells. In Gallus gallus (Chicken), this protein is Solute carrier family 2, facilitated glucose transporter member 2.